The primary structure comprises 617 residues: Putative type VI secretion system protein VgrGA (617 aa).

Disordered stretches follow at residues 325–344 and 449–469; these read GQQP…TLSN and RTFH…TRTS.

Belongs to the VgrG protein family.

Its function is as follows. A Vgr protein that is probably part of a type VI secretion system (T6SS). May be required for export of proteins involved in Rhs-mediated cellular contact-dependent growth inhibition (CDI). The chain is Putative type VI secretion system protein VgrGA (vgrGA) from Dickeya dadantii (strain 3937) (Erwinia chrysanthemi (strain 3937)).